A 518-amino-acid chain; its full sequence is T-box transcription factor TBX5 (518 aa).

The disordered stretch occupies residues 1–46 (MADADEGFGLAHTPLEPDAKDLPCDSKPESALGAPSKSPSSPQAAF). Over residues 15 to 28 (LEPDAKDLPCDSKP) the composition is skewed to basic and acidic residues. The segment covering 34-45 (APSKSPSSPQAA) has biased composition (low complexity). A DNA-binding region (T-box) is located at residues 58–238 (LHERELWLKF…NNPFAKGFRG (181 aa)). Residues 250 to 356 (MQSKEYPVVP…PSEEDSFYRS (107 aa)) are disordered. A compositionally biased stretch (polar residues) spans 262–301 (TVRQKVASNHSPFSSESRALSTSSNLGSQYQCENGVSGPS). At K339 the chain carries N6-acetyllysine.

As to quaternary structure, monomer. Homodimer (via the T-box); binds DNA as homodimer. Interacts (via the T-box) with NKX2-5 (via the homeobox); this complex binds DNA. Interacts with GATA4. Interacts with KAT2A and KAT2B. Post-translationally, acetylation at Lys-339 by KAT2A and KAT2B promotes nuclear retention.

It is found in the nucleus. Its subcellular location is the cytoplasm. In terms of biological role, DNA-binding protein that regulates the transcription of several genes and is involved in heart development and limb pattern formation. Binds to the core DNA motif of NPPA promoter. The protein is T-box transcription factor TBX5 (TBX5) of Homo sapiens (Human).